Here is a 199-residue protein sequence, read N- to C-terminus: Dephospho-CoA kinase (199 aa).

Positions 3–199 (ILGLTGSIGM…ATAKMPQRRA (197 aa)) constitute a DPCK domain. An ATP-binding site is contributed by 11 to 16 (GMGKST).

It belongs to the CoaE family.

It localises to the cytoplasm. The catalysed reaction is 3'-dephospho-CoA + ATP = ADP + CoA + H(+). It participates in cofactor biosynthesis; coenzyme A biosynthesis; CoA from (R)-pantothenate: step 5/5. Functionally, catalyzes the phosphorylation of the 3'-hydroxyl group of dephosphocoenzyme A to form coenzyme A. This chain is Dephospho-CoA kinase, found in Rhodopseudomonas palustris (strain BisB18).